The following is a 524-amino-acid chain: Gamma-taxilin (524 aa).

Residues 1–10 (MATRLEEVTR) show a composition bias toward basic and acidic residues. Disordered regions lie at residues 1–37 (MATR…KFEI) and 64–86 (LQHQ…DEGS). Arg-12 and Arg-24 each carry omega-N-methylarginine. Phosphoserine is present on residues Ser-79, Ser-86, and Ser-97. Over residues 106-115 (REEIPGREAR) the composition is skewed to basic and acidic residues. Positions 106–130 (REEIPGREARTGPPDGQQDSECSRN) are disordered. Residues 153 to 465 (EEKLAALCKK…KEQVSIKAAD (313 aa)) are a coiled coil. Residue Tyr-283 is modified to Phosphotyrosine. Residues 501–524 (VCEKSAAQKPSSSGSPAQGIESVD) form a disordered region. At Ser-512 the chain carries Phosphoserine.

Belongs to the taxilin family. In terms of assembly, binds to the C-terminal coiled coil region of syntaxin family members STX1A, STX3A and STX4A. Forms a heterodimer with ATF4 in osteoblasts.

The protein resides in the nucleus membrane. It localises to the cytoplasm. Its subcellular location is the cytosol. Its function is as follows. May be involved in intracellular vesicle traffic. Inhibits ATF4-mediated transcription, possibly by dimerizing with ATF4 to form inactive dimers that cannot bind DNA. May be involved in regulating bone mass density through an ATF4-dependent pathway. May be involved in cell cycle progression. The chain is Gamma-taxilin (Txlng) from Mus musculus (Mouse).